A 299-amino-acid polypeptide reads, in one-letter code: MQESINDLNINPQGIYIDATFGRGGHSKAILNRLTTGRLIAFDKDLDAISYARENFQFSNFEIVHASFASIYDYCLQHSLLGKIDGIIMDLGVSSPQLDNAARGFSFTHNGPLDMRMDVSKGITASQALEELSVDDLSYIFKVYGEERFAKKIALRIKDYIQQNGSIRTTLELAELIRATIGKKEKKNPATRCFQALRIYVNNELKDLEALLENILAVIKSGGRIAVISFHSLEDRIVKQKFSALINPKQELNRITKMLPQDSSQIKLKWITKKSKANEDELNQNVRSRSAILRVVEKL.

S-adenosyl-L-methionine contacts are provided by residues 24–26 (GGH), D43, F68, D90, and Q97.

This sequence belongs to the methyltransferase superfamily. RsmH family.

The protein localises to the cytoplasm. It carries out the reaction cytidine(1402) in 16S rRNA + S-adenosyl-L-methionine = N(4)-methylcytidine(1402) in 16S rRNA + S-adenosyl-L-homocysteine + H(+). In terms of biological role, specifically methylates the N4 position of cytidine in position 1402 (C1402) of 16S rRNA. The protein is Ribosomal RNA small subunit methyltransferase H of Francisella tularensis subsp. tularensis (strain WY96-3418).